A 911-amino-acid chain; its full sequence is Golgin IMH1 (911 aa).

Disordered stretches follow at residues 16–41 (LAKG…SGLP) and 271–314 (KELP…ETVD). The stretch at 101 to 280 (FFQDLNNKNN…KELPKAISHQ (180 aa)) forms a coiled coil. Basic residues predominate over residues 286-299 (NRRKKNRNKGKKNK). Residues Ser-308 and Ser-660 each carry the phosphoserine modification. Coiled coils occupy residues 312–735 (TVDN…ALKH) and 766–814 (SKAD…KERQ). The tract at residues 814 to 850 (QYSDKSGRVSRSGSIGTLANANIDSSPANNSNPTKLE) is disordered. Polar residues predominate over residues 822–847 (VSRSGSIGTLANANIDSSPANNSNPT). Ser-827 bears the Phosphoserine mark. Thr-830 carries the post-translational modification Phosphothreonine. A GRIP domain is found at 861 to 909 (DSEKNEKIAYIKNVLLGFLEHKEQRNQLLPVISMLLQLDSTDEKRLVMS).

As to quaternary structure, forms oligomers and is present in high-molecular-mass complexes. Interacts with ARL1.

Its subcellular location is the cytoplasm. It is found in the golgi apparatus membrane. In terms of biological role, involved in vesicular transport between an endosomal compartment and the Golgi apparatus. The protein is Golgin IMH1 (IMH1) of Saccharomyces cerevisiae (strain ATCC 204508 / S288c) (Baker's yeast).